A 496-amino-acid chain; its full sequence is Splicing factor U2AF 65 kDa subunit (496 aa).

Residues 1–26 (MSDHQDGMKLEDIERQFLDVAQREGG) show a composition bias toward basic and acidic residues. Residues 1–142 (MSDHQDGMKL…PKKYRFWDVP (142 aa)) are disordered. Positions 59-77 (KKRKRSRSRDRDTRRRSRS) are enriched in basic residues. Basic and acidic residues-rich tracts occupy residues 78-96 (RDRG…DRSR) and 105-138 (GGRD…KYRF). RRM domains lie at 184-266 (RRLY…RPRD), 291-368 (NKIF…LACA), and 404-488 (NMVT…YYDV).

In terms of assembly, forms a heterodimer with the U2AF small subunit.

It is found in the nucleus. Its function is as follows. Necessary for the splicing of pre-mRNA. Binds to the polypyrimidine tract of introns early during spliceosome assembly. In Caenorhabditis elegans, this protein is Splicing factor U2AF 65 kDa subunit (uaf-1).